Here is a 310-residue protein sequence, read N- to C-terminus: Malate dehydrogenase (310 aa).

Residues 7–13 (GAAGGIG) and Asp-34 each bind NAD(+). Residues Arg-81 and Arg-87 each contribute to the substrate site. NAD(+) contacts are provided by residues Asn-94 and 117–119 (ITN). Substrate contacts are provided by Asn-119 and Arg-153. Catalysis depends on His-177, which acts as the Proton acceptor. Met-227 lines the NAD(+) pocket.

Belongs to the LDH/MDH superfamily. MDH type 1 family. Homodimer.

The catalysed reaction is (S)-malate + NAD(+) = oxaloacetate + NADH + H(+). Catalyzes the reversible oxidation of malate to oxaloacetate. The sequence is that of Malate dehydrogenase from Idiomarina loihiensis (strain ATCC BAA-735 / DSM 15497 / L2-TR).